The primary structure comprises 274 residues: Regulator of G-protein signaling rgs-11 (274 aa).

The region spanning 137 to 256 is the RGS domain; sequence SPGLLAASKY…LEDPLYLDLL (120 aa).

This is Regulator of G-protein signaling rgs-11 (rgs-11) from Caenorhabditis elegans.